Here is a 497-residue protein sequence, read N- to C-terminus: Serine/threonine-protein kinase 3 (497 aa).

Met1 bears the N-acetylmethionine mark. The disordered stretch occupies residues 1–20; that stretch reads MEQPPASKSKLKKLSEDSLT. A Phosphoserine modification is found at Ser15. The Protein kinase domain maps to 27–278; that stretch reads FDVLEKLGEG…ATQLLQHPFI (252 aa). ATP contacts are provided by residues 33–41 and Lys56; that span reads LGEGSYGSV. Residue Thr117 is modified to Phosphothreonine; by PKB/AKT1. Asp146 serves as the catalytic Proton acceptor. 2 residues coordinate Mg(2+): Asn151 and Asp164. At Thr180 the chain carries Phosphothreonine; by autocatalysis. The stretch at 287–328 forms a coiled coil; sequence LRDLIAEAMEIKAKRHEEQQRELEEEEENSDEDELDSHTMVK. Disordered stretches follow at residues 301-343 and 368-394; these read RHEE…TSTM and NSEEEEEEEEEEEEDGTMKRNATSPQV. The segment covering 309-321 has biased composition (acidic residues); it reads LEEEEENSDEDEL. Residue Ser316 is modified to Phosphoserine. The span at 326 to 343 shows a compositional bias: polar residues; that stretch reads MVKTSSESVGTMRATSTM. A Phosphothreonine modification is found at Thr336. Residues 366 to 387 are a coiled coil; it reads VINSEEEEEEEEEEEEDGTMKR. The span at 369–382 shows a compositional bias: acidic residues; sequence SEEEEEEEEEEEED. Thr384 carries the post-translational modification Phosphothreonine. Position 390 is a phosphothreonine; by PKB/AKT1 (Thr390). Phosphoserine is present on residues Ser391 and Ser450. Residues 443–490 form the SARAH domain; it reads FDFLKNLSLEELQMRLKALDPMMEREIEELHQRYSAKRQPILDAMDAK. Residues 448–479 adopt a coiled-coil conformation; sequence NLSLEELQMRLKALDPMMEREIEELHQRYSAK.

This sequence belongs to the protein kinase superfamily. STE Ser/Thr protein kinase family. STE20 subfamily. As to quaternary structure, homodimer; mediated via the coiled-coil region. Interacts with NORE1, which inhibits autoactivation. Interacts with and stabilizes SAV1. Interacts with RAF1, which prevents dimerization and phosphorylation. Interacts with RASSF1. Interacts (via SARAH domain) with isoform 1 of NEK2. Interacts with ESR1 only in the presence of SAV1. Interacts with PKB/AKT1. Forms a tripartite complex with MOBKL1B and STK38. Interacts with RASSF2 (via SARAH domain). Interacts with DLG5 (via PDZ domain 3). Interacts with LATS1; this interaction is inhibited in the presence of DLG5. Interacts with MARK3 in the presence of DLG5. Interacts with RASSF5; this interaction inhibits STK3 autoactivation through heterodimerization. Interacts (when phosphorylated) with SLMAP (via FHA domain); the interaction associates STK3 with the STRIPAK complex. Mg(2+) is required as a cofactor. Autophosphorylated on two residues Thr-174 and Thr-180, leading to activation. Phosphorylation at Thr-117 and Thr-390 by PKB/AKT1, leads to inhibition of its: cleavage, kinase activity, autophosphorylation at Thr-180, binding to RASSF1 and nuclear translocation, and increase in its binding to RAF1. Phosphorylated at Ser-15 by PLK1, leading to activation. Post-translationally, proteolytically cleaved by caspase-3 during apoptosis. Proteolytic cleavage results in kinase activation and nuclear translocation of the truncated form (MST1/N). In terms of processing, ubiquitinated by TRIM69; leading to its redistribution to the perinuclear cytoskeleton.

It localises to the cytoplasm. The protein resides in the nucleus. The enzyme catalyses L-seryl-[protein] + ATP = O-phospho-L-seryl-[protein] + ADP + H(+). It carries out the reaction L-threonyl-[protein] + ATP = O-phospho-L-threonyl-[protein] + ADP + H(+). Inhibited by the C-terminal non-catalytic region. Activated by caspase-cleavage. Full activation also requires homodimerization and autophosphorylation of Thr-180, which are inhibited by the proto-oncogene product RAF1. Activated by RASSF1 which acts by preventing its dephosphorylation. When autophosphorylated at Thr-180, recruits STRIPAK complex and promotes PP2A-mediated dephosphorylation and inactivation of STK3. In terms of biological role, stress-activated, pro-apoptotic kinase which, following caspase-cleavage, enters the nucleus and induces chromatin condensation followed by internucleosomal DNA fragmentation. Key component of the Hippo signaling pathway which plays a pivotal role in organ size control and tumor suppression by restricting proliferation and promoting apoptosis. The core of this pathway is composed of a kinase cascade wherein STK3/MST2 and STK4/MST1, in complex with its regulatory protein SAV1, phosphorylates and activates LATS1/2 in complex with its regulatory protein MOB1, which in turn phosphorylates and inactivates YAP1 oncoprotein and WWTR1/TAZ. Phosphorylation of YAP1 by LATS2 inhibits its translocation into the nucleus to regulate cellular genes important for cell proliferation, cell death, and cell migration. STK3/MST2 and STK4/MST1 are required to repress proliferation of mature hepatocytes, to prevent activation of facultative adult liver stem cells (oval cells), and to inhibit tumor formation. Phosphorylates NKX2-1. Phosphorylates NEK2 and plays a role in centrosome disjunction by regulating the localization of NEK2 to centrosomes, and its ability to phosphorylate CROCC and CEP250. In conjunction with SAV1, activates the transcriptional activity of ESR1 through the modulation of its phosphorylation. Positively regulates RAF1 activation via suppression of the inhibitory phosphorylation of RAF1 on 'Ser-259'. Phosphorylates MOBKL1A and RASSF2. Phosphorylates MOBKL1B on 'Thr-74'. Acts cooperatively with MOBKL1B to activate STK38. This is Serine/threonine-protein kinase 3 (Stk3) from Mus musculus (Mouse).